A 337-amino-acid chain; its full sequence is DNA replication regulator sld2 (337 aa).

A phosphothreonine; by cdc2 mark is found at T60 and T74. The disordered stretch occupies residues 71–97 (KFQTPTKQRAETEANESPKAPRNDYLQ). A Phosphoserine; by cdc2 modification is found at S87. T99 and T154 each carry phosphothreonine; by cdc2. S183 carries the phosphoserine modification. The segment at 258-302 (SMNLSKSHLEGLPEIDEDAENGIDDNEDTTASKDSSPFLDLQSER) is disordered. The segment covering 270–285 (PEIDEDAENGIDDNED) has biased composition (acidic residues).

It belongs to the SLD2 family. In terms of assembly, interacts with rad4. Phosphorylated by cdc2 at the onset of S-phase.

Its subcellular location is the cytoplasm. It is found in the nucleus. Its function is as follows. Has a role in the initiation of DNA replication. Required at S-phase checkpoint. The sequence is that of DNA replication regulator sld2 (drc1) from Schizosaccharomyces pombe (strain 972 / ATCC 24843) (Fission yeast).